The chain runs to 227 residues: tRNA (guanine-N(1)-)-methyltransferase (227 aa).

Residues Gly-110 and 129 to 134 contribute to the S-adenosyl-L-methionine site; that span reads IGDYVL.

The protein belongs to the RNA methyltransferase TrmD family. In terms of assembly, homodimer.

The protein resides in the cytoplasm. The enzyme catalyses guanosine(37) in tRNA + S-adenosyl-L-methionine = N(1)-methylguanosine(37) in tRNA + S-adenosyl-L-homocysteine + H(+). In terms of biological role, specifically methylates guanosine-37 in various tRNAs. The sequence is that of tRNA (guanine-N(1)-)-methyltransferase from Mycoplasmopsis synoviae (strain 53) (Mycoplasma synoviae).